The primary structure comprises 540 residues: GMP synthase [glutamine-hydrolyzing] (540 aa).

In terms of domain architecture, Glutamine amidotransferase type-1 spans 26–216; that stretch reads IIIILDFGSQ…VYHICECEPT (191 aa). Residue cysteine 103 is the Nucleophile of the active site. Residues histidine 190 and glutamate 192 contribute to the active site. The 199-residue stretch at 217 to 415 folds into the GMPS ATP-PPase domain; that stretch reads WTTAAFVEEA…VGLPEEIVQR (199 aa). 244–250 contributes to the ATP binding site; that stretch reads SGGVDSS.

Homodimer.

The enzyme catalyses XMP + L-glutamine + ATP + H2O = GMP + L-glutamate + AMP + diphosphate + 2 H(+). The protein operates within purine metabolism; GMP biosynthesis; GMP from XMP (L-Gln route): step 1/1. Functionally, catalyzes the synthesis of GMP from XMP. This chain is GMP synthase [glutamine-hydrolyzing], found in Trichormus variabilis (strain ATCC 29413 / PCC 7937) (Anabaena variabilis).